We begin with the raw amino-acid sequence, 321 residues long: Olfactory receptor 51V1 (321 aa).

Over methionine 1–proline 34 the chain is Extracellular. Asparagine 18 carries an N-linked (GlcNAc...) asparagine glycan. A helical membrane pass occupies residues tryptophan 35–leucine 55. At histidine 56–serine 63 the chain is on the cytoplasmic side. Residues leucine 64 to leucine 84 form a helical membrane-spanning segment. Over serine 85–alanine 108 the chain is Extracellular. A disulfide bridge connects residues cysteine 106 and cysteine 188. A helical membrane pass occupies residues glutamine 109–phenylalanine 129. At aspartate 130–serine 148 the chain is on the cytoplasmic side. The helical transmembrane segment at arginine 149–isoleucine 169 threads the bilayer. Residues isoleucine 170–serine 205 are Extracellular-facing. The helical transmembrane segment at tyrosine 206–serine 226 threads the bilayer. Residues tyrosine 227–leucine 246 are Cytoplasmic-facing. The chain crosses the membrane as a helical span at residues phenylalanine 247–leucine 267. Topologically, residues threonine 268–histidine 282 are extracellular. A helical transmembrane segment spans residues valine 283–valine 303. Topologically, residues lysine 304–tyrosine 321 are cytoplasmic.

The protein belongs to the G-protein coupled receptor 1 family.

The protein localises to the cell membrane. Odorant receptor. This is Olfactory receptor 51V1 (OR51V1) from Homo sapiens (Human).